A 315-amino-acid chain; its full sequence is Probable integrase/recombinase aq_aa09 (315 aa).

One can recognise a Core-binding (CB) domain in the interval 1–78 (MEHFIDTYLY…EVRLFYEWLQ (78 aa)). Residues 106–313 (SKKKYYSDDE…REKQLEAILE (208 aa)) form the Tyr recombinase domain. Active-site residues include Arg-150, Lys-186, His-263, Arg-266, and His-289. Catalysis depends on Tyr-299, which acts as the O-(3'-phospho-DNA)-tyrosine intermediate.

The protein belongs to the 'phage' integrase family.

Functionally, may function as an integrase. This Aquifex aeolicus (strain VF5) protein is Probable integrase/recombinase aq_aa09.